We begin with the raw amino-acid sequence, 76 residues long: Acyl carrier protein (76 aa).

The Carrier domain occupies 2-76 (SSIFDKVKAI…SAVEYIKENQ (75 aa)). S36 is modified (O-(pantetheine 4'-phosphoryl)serine).

Belongs to the acyl carrier protein (ACP) family. Post-translationally, 4'-phosphopantetheine is transferred from CoA to a specific serine of apo-ACP by AcpS. This modification is essential for activity because fatty acids are bound in thioester linkage to the sulfhydryl of the prosthetic group.

The protein localises to the cytoplasm. Its pathway is lipid metabolism; fatty acid biosynthesis. Functionally, carrier of the growing fatty acid chain in fatty acid biosynthesis. The protein is Acyl carrier protein of Heliobacterium modesticaldum (strain ATCC 51547 / Ice1).